A 74-amino-acid polypeptide reads, in one-letter code: Translation initiation factor IF-1 (74 aa).

The S1-like domain maps to 1–73 (MAKKDDIIEF…TKGRITYRGK (73 aa)).

This sequence belongs to the IF-1 family. Component of the 30S ribosomal translation pre-initiation complex which assembles on the 30S ribosome in the order IF-2 and IF-3, IF-1 and N-formylmethionyl-tRNA(fMet); mRNA recruitment can occur at any time during PIC assembly.

Its subcellular location is the cytoplasm. Functionally, one of the essential components for the initiation of protein synthesis. Stabilizes the binding of IF-2 and IF-3 on the 30S subunit to which N-formylmethionyl-tRNA(fMet) subsequently binds. Helps modulate mRNA selection, yielding the 30S pre-initiation complex (PIC). Upon addition of the 50S ribosomal subunit IF-1, IF-2 and IF-3 are released leaving the mature 70S translation initiation complex. This is Translation initiation factor IF-1 from Psychrobacter sp. (strain PRwf-1).